A 426-amino-acid chain; its full sequence is MKRDDLIFDIIEKEHQRQLKGIELIASENFVSDQVMQAMGSCLTNKYAEGYPGKRYYGGCEVVDQSEQIAIDRLKQIFGAEWANVQPHSGAQANAAVFLAVLNPGDKFMGLNLAHGGHLSHGSLVNTSGIIYTPCEYNLNKETGRVDYDQMEEIALREKPKMIIGGGSAYSREWDYKRMREIADKVGAILMIDMAHPAGLIAAGLLDNPVKYAHIVTSTTHKTLRGPRGGVIMMGKDFPNPWGKKTPKGEIKMMSQLLDSAVFPGIQGGPLEHVIAAKAVAFGECLQPEYKEYQTQVKKNAAVLAQALIDRGFTIVSGGTDNHSMLVDLRTKYPDLTGKVAEKALVAADITVNKNMVPFDSRSAFQTSGIRLGTPAITTRGAKEDLMLEIAEMIETVLSNVDNEEVIAQVRARVNETMKKYPIFAY.

(6S)-5,6,7,8-tetrahydrofolate is bound by residues L113 and 117–119; that span reads GHL. At K222 the chain carries N6-(pyridoxal phosphate)lysine. 363-365 is a binding site for (6S)-5,6,7,8-tetrahydrofolate; it reads SAF.

This sequence belongs to the SHMT family. In terms of assembly, homodimer. Pyridoxal 5'-phosphate serves as cofactor.

The protein localises to the cytoplasm. It catalyses the reaction (6R)-5,10-methylene-5,6,7,8-tetrahydrofolate + glycine + H2O = (6S)-5,6,7,8-tetrahydrofolate + L-serine. It functions in the pathway one-carbon metabolism; tetrahydrofolate interconversion. The protein operates within amino-acid biosynthesis; glycine biosynthesis; glycine from L-serine: step 1/1. In terms of biological role, catalyzes the reversible interconversion of serine and glycine with tetrahydrofolate (THF) serving as the one-carbon carrier. This reaction serves as the major source of one-carbon groups required for the biosynthesis of purines, thymidylate, methionine, and other important biomolecules. Also exhibits THF-independent aldolase activity toward beta-hydroxyamino acids, producing glycine and aldehydes, via a retro-aldol mechanism. The polypeptide is Serine hydroxymethyltransferase (Phocaeicola vulgatus (strain ATCC 8482 / DSM 1447 / JCM 5826 / CCUG 4940 / NBRC 14291 / NCTC 11154) (Bacteroides vulgatus)).